Here is a 197-residue protein sequence, read N- to C-terminus: uncharacterized protein (197 aa).

The tract at residues methionine 1–valine 135 is disordered. Over residues arginine 14–lysine 32 the composition is skewed to polar residues. Over residues isoleucine 83–alanine 96 the composition is skewed to basic and acidic residues. Positions serine 116–asparagine 132 are enriched in basic residues.

The protein to Rhizobium NGR234A y4nF and y4aO.

This is an uncharacterized protein from Rhizobium meliloti (strain 1021) (Ensifer meliloti).